We begin with the raw amino-acid sequence, 302 residues long: Glycine--tRNA ligase alpha subunit (302 aa).

Belongs to the class-II aminoacyl-tRNA synthetase family. In terms of assembly, tetramer of two alpha and two beta subunits.

It localises to the cytoplasm. The enzyme catalyses tRNA(Gly) + glycine + ATP = glycyl-tRNA(Gly) + AMP + diphosphate. This chain is Glycine--tRNA ligase alpha subunit, found in Haemophilus influenzae (strain PittGG).